Here is a 661-residue protein sequence, read N- to C-terminus: Heme transporter BhuA (661 aa).

The N-terminal stretch at 1–23 (MKFTRTLVLASTSLLATVATSQA) is a signal peptide. In terms of domain architecture, TBDR plug spans 48-159 (KDNIEATGGT…AAGAIRYETV (112 aa)). The region spanning 170 to 661 (TFGARIIGSY…TFTFQTAFKF (492 aa)) is the TBDR beta-barrel domain.

It belongs to the TonB-dependent receptor family.

The protein resides in the cell outer membrane. Heme transporter. This Brucella abortus biovar 1 (strain 9-941) protein is Heme transporter BhuA (bhuA).